A 661-amino-acid chain; its full sequence is PAN2-PAN3 deadenylation complex subunit pan3 (661 aa).

Disordered regions lie at residues 1–29 (MASV…NAKD) and 53–131 (DPHK…RQDA). Residues 26-55 (NAKDTLCRNVTIYGRCRYEDKGCAFNHDPH) form a C3H1-type zinc finger. The PABPC-interacting motif-2 (PAM-2) signature appears at 63–83 (NASKKRFNVDSPSFTPSLLPS). Residues 77-104 (TPSLLPSNGSSPTSSSSSLKKSSTISPK) are compositionally biased toward low complexity. Residues 115 to 126 (TAASRSNTSTPG) are compositionally biased toward polar residues. The pseudokinase domain stretch occupies residues 263–524 (QTLPNTQLPA…NIDILINGIS (262 aa)). Residues arginine 315, 364-371 (DYHPLSKT), and 424-425 (SK) contribute to the ATP site. Residues 525–563 (SQLMSTFDSALHLDDQLTSDLGRELENGRLVRLLTKLNF) adopt a coiled-coil conformation. Positions 564–661 (INERPEHEHD…ALLRPSRRPH (98 aa)) are knob domain.

Belongs to the protein kinase superfamily. PAN3 family. In terms of assembly, homodimer. Forms a heterotrimer with a catalytic subunit pan2 to form the poly(a)-nuclease (PAN) deadenylation complex. Interacts (via PAM-2 motif) with poly(A)-binding protein pab1 (via PABC domain), conferring substrate specificity of the enzyme complex.

It is found in the cytoplasm. In terms of biological role, regulatory subunit of the poly(A)-nuclease (PAN) deadenylation complex, one of two cytoplasmic mRNA deadenylases involved in mRNA turnover. PAN specifically shortens poly(A) tails of RNA and the activity is stimulated by poly(A)-binding protein pab1. PAN deadenylation is followed by rapid degradation of the shortened mRNA tails by the CCR4-NOT complex. Deadenylated mRNAs are then degraded by two alternative mechanisms, namely exosome-mediated 3'-5' exonucleolytic degradation, or deadenylation-dependent mRNA decaping and subsequent 5'-3' exonucleolytic degradation by XRN1. May also be involved in post-transcriptional maturation of mRNA poly(A) tails. pan3 acts as a positive regulator for PAN activity, recruiting the catalytic subunit pan2 to mRNA via its interaction with RNA and with pab1. This Emericella nidulans (strain FGSC A4 / ATCC 38163 / CBS 112.46 / NRRL 194 / M139) (Aspergillus nidulans) protein is PAN2-PAN3 deadenylation complex subunit pan3.